A 250-amino-acid chain; its full sequence is ATP synthase subunit a (250 aa).

6 consecutive transmembrane segments (helical) span residues 25–45 (VSFT…FFFL), 84–104 (VFFP…VIGL), 115–135 (IVVT…YGFY), 141–161 (FLHL…IVLI), 187–209 (ALKV…WLGA), and 223–243 (ELLV…IYLN).

The protein belongs to the ATPase A chain family. As to quaternary structure, F-type ATPases have 2 components, CF(1) - the catalytic core - and CF(0) - the membrane proton channel. CF(1) has five subunits: alpha(3), beta(3), gamma(1), delta(1), epsilon(1). CF(0) has three main subunits: a(1), b(2) and c(9-12). The alpha and beta chains form an alternating ring which encloses part of the gamma chain. CF(1) is attached to CF(0) by a central stalk formed by the gamma and epsilon chains, while a peripheral stalk is formed by the delta and b chains.

Its subcellular location is the cell inner membrane. Its function is as follows. Key component of the proton channel; it plays a direct role in the translocation of protons across the membrane. The polypeptide is ATP synthase subunit a (Azorhizobium caulinodans (strain ATCC 43989 / DSM 5975 / JCM 20966 / LMG 6465 / NBRC 14845 / NCIMB 13405 / ORS 571)).